The primary structure comprises 230 residues: Octanoyltransferase (230 aa).

In terms of domain architecture, BPL/LPL catalytic spans 38–215 (AGGADTLLLL…AVCAALDGVL (178 aa)). Substrate contacts are provided by residues 76–83 (RGGKITWH), 145–147 (AIG), and 158–160 (GFA). Catalysis depends on cysteine 176, which acts as the Acyl-thioester intermediate.

It belongs to the LipB family.

The protein resides in the cytoplasm. It carries out the reaction octanoyl-[ACP] + L-lysyl-[protein] = N(6)-octanoyl-L-lysyl-[protein] + holo-[ACP] + H(+). It functions in the pathway protein modification; protein lipoylation via endogenous pathway; protein N(6)-(lipoyl)lysine from octanoyl-[acyl-carrier-protein]: step 1/2. Functionally, catalyzes the transfer of endogenously produced octanoic acid from octanoyl-acyl-carrier-protein onto the lipoyl domains of lipoate-dependent enzymes. Lipoyl-ACP can also act as a substrate although octanoyl-ACP is likely to be the physiological substrate. This chain is Octanoyltransferase, found in Mycobacterium bovis (strain BCG / Tokyo 172 / ATCC 35737 / TMC 1019).